The chain runs to 472 residues: Ribosomal protein uS12 methylthiotransferase RimO (472 aa).

The region spanning 33–143 is the MTTase N-terminal domain; sequence NRIGFVSLGC…VLKHVHKYVP (111 aa). Positions 42, 78, 107, 175, 179, and 182 each coordinate [4Fe-4S] cluster. The region spanning 161 to 398 is the Radical SAM core domain; sequence LTPKHYAYLK…MELQAEISAE (238 aa). The 67-residue stretch at 401–467 folds into the TRAM domain; it reads ARFVGRTLDI…EHDLWAEVVD (67 aa).

Belongs to the methylthiotransferase family. RimO subfamily. [4Fe-4S] cluster serves as cofactor.

It is found in the cytoplasm. The catalysed reaction is L-aspartate(89)-[ribosomal protein uS12]-hydrogen + (sulfur carrier)-SH + AH2 + 2 S-adenosyl-L-methionine = 3-methylsulfanyl-L-aspartate(89)-[ribosomal protein uS12]-hydrogen + (sulfur carrier)-H + 5'-deoxyadenosine + L-methionine + A + S-adenosyl-L-homocysteine + 2 H(+). In terms of biological role, catalyzes the methylthiolation of an aspartic acid residue of ribosomal protein uS12. This is Ribosomal protein uS12 methylthiotransferase RimO from Shewanella putrefaciens (strain CN-32 / ATCC BAA-453).